We begin with the raw amino-acid sequence, 318 residues long: Ferrochelatase (318 aa).

The Fe cation site is built by His186 and Glu264.

This sequence belongs to the ferrochelatase family.

Its subcellular location is the cytoplasm. The enzyme catalyses heme b + 2 H(+) = protoporphyrin IX + Fe(2+). The protein operates within porphyrin-containing compound metabolism; protoheme biosynthesis; protoheme from protoporphyrin-IX: step 1/1. In terms of biological role, catalyzes the ferrous insertion into protoporphyrin IX. This Chlamydia felis (strain Fe/C-56) (Chlamydophila felis) protein is Ferrochelatase.